The primary structure comprises 187 residues: Dihydrofolate reductase (187 aa).

The region spanning proline 4–lysine 185 is the DHFR domain. Residues alanine 10 and glycine 16 to aspartate 22 contribute to the NADP(+) site. Residue glutamate 31 to glutamine 36 coordinates substrate. Lysine 33 bears the N6-acetyllysine; alternate mark. At lysine 33 the chain carries N6-succinyllysine; alternate. An NADP(+)-binding site is contributed by arginine 55–threonine 57. The substrate site is built by asparagine 65 and arginine 71. Residues serine 77 to glutamate 79 and glycine 117 to glutamate 124 contribute to the NADP(+) site.

This sequence belongs to the dihydrofolate reductase family. Homodimer.

The protein localises to the mitochondrion. Its subcellular location is the cytoplasm. It catalyses the reaction (6S)-5,6,7,8-tetrahydrofolate + NADP(+) = 7,8-dihydrofolate + NADPH + H(+). It participates in cofactor biosynthesis; tetrahydrofolate biosynthesis; 5,6,7,8-tetrahydrofolate from 7,8-dihydrofolate: step 1/1. Its function is as follows. Key enzyme in folate metabolism. Contributes to the de novo mitochondrial thymidylate biosynthesis pathway. Catalyzes an essential reaction for de novo glycine and purine synthesis, and for DNA precursor synthesis. Binds its own mRNA. In Mus musculus (Mouse), this protein is Dihydrofolate reductase (Dhfr).